The primary structure comprises 2514 residues: Probable polyketide synthase 8/35 (2514 aa).

The region spanning 11-442 is the Ketosynthase family 3 (KS3) domain; it reads DKGVAIVGVG…GSNCCLLISE (432 aa). Catalysis depends on for beta-ketoacyl synthase activity residues Cys181, His323, and His362. The tract at residues 635–668 is acyl/malonyl transferase; the sequence is GVNPSFILGHSLGEISAAYCSGMIDLDTFCYTVY. Ser645 (for acyl/malonyl transferase activity) is an active-site residue. Positions 925 to 1047 are N-terminal hotdog fold; the sequence is IDHLGLSNSY…ANFQLLDHGN (123 aa). A PKS/mFAS DH domain is found at 925-1209; it reads IDHLGLSNSY…FKSLIPIKHS (285 aa). The active-site Proton acceptor; for dehydratase activity is His959. Residues 1064-1209 are C-terminal hotdog fold; it reads NLSKLTKNEL…FKSLIPIKHS (146 aa). The Proton donor; for dehydratase activity role is filled by Asp1122. The region spanning 2431–2508 is the Carrier domain; that stretch reads IGNKNIDELF…ISIKMILNSL (78 aa). Residue Ser2468 is modified to O-(pantetheine 4'-phosphoryl)serine.

Pantetheine 4'-phosphate serves as cofactor.

Probable polyketide synthase. The sequence is that of Probable polyketide synthase 8/35 (pks8) from Dictyostelium discoideum (Social amoeba).